The sequence spans 207 residues: Ribosomal RNA small subunit methyltransferase G (207 aa).

S-adenosyl-L-methionine contacts are provided by residues Gly73, Leu78, Val124–Glu125, and Arg139.

This sequence belongs to the methyltransferase superfamily. RNA methyltransferase RsmG family.

Its subcellular location is the cytoplasm. It catalyses the reaction guanosine(527) in 16S rRNA + S-adenosyl-L-methionine = N(7)-methylguanosine(527) in 16S rRNA + S-adenosyl-L-homocysteine. Functionally, specifically methylates the N7 position of guanine in position 527 of 16S rRNA. This is Ribosomal RNA small subunit methyltransferase G from Enterobacter sp. (strain 638).